Reading from the N-terminus, the 387-residue chain is Acyl-[acyl-carrier-protein] 6-desaturase (387 aa).

Residues 1–29 constitute a chloroplast transit peptide; it reads MALVFKSIGAHKTPPCTLNLASPALYHTR. 6 residues coordinate Fe cation: E131, E169, H172, E222, E255, and H258.

Belongs to the fatty acid desaturase type 2 family. Requires Fe(2+) as cofactor.

The protein resides in the plastid. It localises to the chloroplast. The enzyme catalyses hexadecanoyl-[ACP] + 2 reduced [2Fe-2S]-[ferredoxin] + O2 + 2 H(+) = (6Z)-hexadecenoyl-[ACP] + 2 oxidized [2Fe-2S]-[ferredoxin] + 2 H2O. It functions in the pathway lipid metabolism; fatty acid metabolism. Inhibited by KCN or H(2)O(2). Its function is as follows. Delta(6) fatty acid desaturase introducing a cis double bond at carbon 6 of palmitoyl-[acyl-carrier protein](16:0-ACP), producing 16:1(6Z)-ACP. No activity with the coenzyme A ester of the fatty acid. The position of the double bond is determined by its distance from the carboxyl end of the fatty acid. Low activity with several saturated acyl-[acyl-carrier protein]s, including 14:0-ACP and 18:0-ACP. Requires reduced ferredoxin for detectable in vitro activity. This is Acyl-[acyl-carrier-protein] 6-desaturase from Thunbergia alata (Black-eyed Susan vine).